The sequence spans 496 residues: Coiled-coil domain-containing protein 77 (496 aa).

The disordered stretch occupies residues methionine 1–glutamate 42. The span at proline 15–aspartate 33 shows a compositional bias: polar residues. The stretch at arginine 51–leucine 113 forms a coiled coil. The tract at residues glutamine 170–alanine 208 is disordered. A coiled-coil region spans residues glutamine 214 to isoleucine 495.

This Xenopus laevis (African clawed frog) protein is Coiled-coil domain-containing protein 77 (ccdc77).